A 1499-amino-acid chain; its full sequence is Phospholipid-transporting ATPase VA (1499 aa).

The tract at residues 1–53 (MEREPAGTEEPGPPGRRRRREGRTRTVRSNLLPPPGAEDPAAGAAKGERRRRR) is disordered. The Cytoplasmic segment spans residues 1-86 (MEREPAGTEE…KNLFEQFHRP (86 aa)). The span at 15-26 (GRRRRREGRTRT) shows a compositional bias: basic residues. The helical transmembrane segment at 87–106 (ANVYFVFIALLNFVPAVNAF) threads the bilayer. The Exoplasmic loop portion of the chain corresponds to 107 to 110 (QPGL). A helical transmembrane segment spans residues 111–128 (ALAPVLFILAITAFRDLW). Residues 129–309 (EDYSRHRSDH…SKLERQMNCD (181 aa)) lie on the Cytoplasmic side of the membrane. Residues 310–332 (VLWCVLLLVCMSLFSAVGHGLWI) form a helical membrane-spanning segment. Residues 333–362 (WRYQEKKSLFYVPKSDGSSLSPVTAAVYSF) lie on the Exoplasmic loop side of the membrane. The chain crosses the membrane as a helical span at residues 363 to 384 (LTMIIVLQVLIPISLYVSIEIV). Residues 385–1087 (KACQVYFINQ…GHWCYSRLAN (703 aa)) are Cytoplasmic-facing. Asp427 acts as the 4-aspartylphosphate intermediate in catalysis. ATP-binding residues include Asp427, Lys428, and Thr429. Mg(2+) is bound at residue Asp427. Thr429 lines the Mg(2+) pocket. Residues 464–531 (ADSEEEEVVP…AFSSPMEKDI (68 aa)) are disordered. Ser466 carries the post-translational modification Phosphoserine. Residues 477–499 (SVSQRGSIGSHQSVRVVHRTQST) show a composition bias toward polar residues. Residues Glu700, Phe742, Lys766, Arg809, Thr889, Gly890, Asp891, Arg1005, and Lys1011 each coordinate ATP. Asp1031 lines the Mg(2+) pocket. Residues Asn1034 and Asp1035 each contribute to the ATP site. Residue Asp1035 participates in Mg(2+) binding. A helical transmembrane segment spans residues 1088-1108 (MVLYFFYKNTMFVGLLFWFQF). The Exoplasmic loop portion of the chain corresponds to 1109–1119 (FCGFSASTMID). Residues 1120–1140 (QWYLIFFNLLFSSLPPLVTGV) form a helical membrane-spanning segment. Over 1141–1170 (LDRDVPANVLLTNPQLYKSGQNMEEYRPRT) the chain is Cytoplasmic. A helical membrane pass occupies residues 1171 to 1192 (FWFNMADAAFQSLVCFSIPYLA). Topologically, residues 1193-1199 (YYDSNVD) are exoplasmic loop. The chain crosses the membrane as a helical span at residues 1200–1222 (LFTWGTPIVTIALLTFLLHLGIE). At 1223–1228 (TKTWTW) the chain is on the cytoplasmic side. A helical membrane pass occupies residues 1229-1249 (LNWITCGFSVLLFFTVALIYN). Residues 1250–1267 (ASCATCYPPSNPYWTMQA) lie on the Exoplasmic loop side of the membrane. Residues 1268–1292 (LLGDPVFYLTCLMTPVAALLPRLFF) form a helical membrane-spanning segment. Topologically, residues 1293-1499 (RSLQGRVFPT…LIGASSRRSQ (207 aa)) are cytoplasmic. Disordered regions lie at residues 1311–1356 (TRKS…PSWH) and 1464–1499 (DGQA…RRSQ). The span at 1330-1340 (LPKDSGTEHSS) shows a compositional bias: basic and acidic residues. Polar residues predominate over residues 1341–1356 (GRTVKTSVPLSQPSWH).

Belongs to the cation transport ATPase (P-type) (TC 3.A.3) family. Type IV subfamily. As to quaternary structure, component of a P4-ATPase flippase complex which consists of a catalytic alpha subunit ATP10A and an accessory beta subunit TMEM30A. The cofactor is Mg(2+). Autophosphorylated at the conserved aspartate of the P-type ATPase signature sequence. As to expression, widely expressed, with highest levels in kidney, followed by lung, brain, prostate, testis, ovary and small intestine.

Its subcellular location is the cell membrane. The protein localises to the endoplasmic reticulum membrane. It carries out the reaction ATP + H2O + phospholipidSide 1 = ADP + phosphate + phospholipidSide 2.. It catalyses the reaction a 1,2-diacyl-sn-glycero-3-phosphocholine(out) + ATP + H2O = a 1,2-diacyl-sn-glycero-3-phosphocholine(in) + ADP + phosphate + H(+). The enzyme catalyses a beta-D-glucosyl-(1&lt;-&gt;1')-N-acylsphing-4-enine(out) + ATP + H2O = a beta-D-glucosyl-(1&lt;-&gt;1')-N-acylsphing-4-enine(in) + ADP + phosphate + H(+). Its activity is regulated as follows. Inhibited under hypotonic conditions. Its function is as follows. Catalytic component of P4-ATPase flippase complex, which catalyzes the hydrolysis of ATP coupled to the transport of phosphatidylcholine (PC) from the outer to the inner leaflet of the plasma membrane. Initiates inward plasma membrane bending and recruitment of Bin/amphiphysin/Rvs (BAR) domain-containing proteins involved in membrane tubulation and cell trafficking. Facilitates ITGB1/beta1 integrin endocytosis, delaying cell adhesion and cell spreading on extracellular matrix. Has low flippase activity toward glucosylceramide (GlcCer). The polypeptide is Phospholipid-transporting ATPase VA (Homo sapiens (Human)).